Reading from the N-terminus, the 688-residue chain is Glycine--tRNA ligase beta subunit (688 aa).

It belongs to the class-II aminoacyl-tRNA synthetase family. Tetramer of two alpha and two beta subunits.

Its subcellular location is the cytoplasm. It catalyses the reaction tRNA(Gly) + glycine + ATP = glycyl-tRNA(Gly) + AMP + diphosphate. This chain is Glycine--tRNA ligase beta subunit, found in Haemophilus influenzae (strain PittEE).